The chain runs to 445 residues: T-box transcription factor TBX20 (445 aa).

Residues 108-287 (LWDKFHELGT…SNPFAKGFRD (180 aa)) constitute a DNA-binding region (T-box). The disordered stretch occupies residues 318–337 (EEDVLGEESQTTQSRGSAFT). Residues 325–337 (ESQTTQSRGSAFT) are compositionally biased toward polar residues.

As to expression, prominently expressed in the extraembryonic mesoderm, developing heart, eye analage and motor neurons of hindbrain and spinal cord. Expressed in extraembryonic tissues such as the amnion and allantois.

Its subcellular location is the nucleus. Acts as a transcriptional activator and repressor required for cardiac development and may have key roles in the maintenance of functional and structural phenotypes in adult heart. In Mus musculus (Mouse), this protein is T-box transcription factor TBX20 (Tbx20).